The primary structure comprises 148 residues: Dermatopontin (148 aa).

A disulfide bond links C14 and C40. N-linked (GlcNAc...) asparagine glycosylation is present at N44. 2 disulfide bridges follow: C66–C93 and C103–C147.

The protein belongs to the dermatopontin family. In terms of processing, the terminal mannose residues of the polysaccharide are 3-O-methylated. No tyrosine sulfation was detected.

The protein localises to the secreted. It is found in the extracellular space. Its subcellular location is the extracellular matrix. Seems to mediate adhesion by cell surface integrin binding. The protein is Dermatopontin of Biomphalaria glabrata (Bloodfluke planorb).